A 1025-amino-acid polypeptide reads, in one-letter code: Dihydropyrimidine dehydrogenase [NADP(+)] (1025 aa).

The region spanning 69–100 (ERGALREAVRCLKCADAPCQKSCPTSLDIKSF) is the 4Fe-4S ferredoxin-type 1 domain. [4Fe-4S] cluster is bound by residues Cys-79, Cys-82, Cys-87, and Cys-91. Val-129 is an FAD binding site. Residues Cys-130, Cys-136, Cys-140, and Gln-156 each coordinate [4Fe-4S] cluster. FAD contacts are provided by residues 194 to 198 (GAGPA), 218 to 226 (EKQEYVGGL), and Arg-235. Residues 340 to 343 (AGDT), 364 to 365 (RK), and Arg-371 contribute to the NADP(+) site. Lys-384 carries the N6-acetyllysine modification. NADP(+) contacts are provided by residues 437 to 439 (PFG) and 481 to 487 (DVVGMAN). Residue 480–489 (GDVVGMANTT) participates in FAD binding. Residues Ser-550 and 574-575 (KT) contribute to the FMN site. Substrate contacts are provided by residues Asn-609 and 668–670 (NLS). The Proton acceptor role is filled by Cys-671. Residue Lys-709 coordinates FMN. 736 to 737 (NT) serves as a coordination point for substrate. FMN-binding positions include Gly-767, 793–795 (TGG), and 816–817 (CS). Ser-905 carries the post-translational modification Phosphoserine. 4Fe-4S ferredoxin-type domains lie at 944–976 (VVAL…FDPE) and 978–1007 (HLPT…MVSR). Positions 953, 956, 959, 963, 986, 989, 992, and 996 each coordinate [4Fe-4S] cluster.

Belongs to the dihydropyrimidine dehydrogenase family. Homodimer. FAD serves as cofactor. Requires FMN as cofactor. [4Fe-4S] cluster is required as a cofactor.

It is found in the cytoplasm. The catalysed reaction is 5,6-dihydrouracil + NADP(+) = uracil + NADPH + H(+). It catalyses the reaction 5,6-dihydrothymine + NADP(+) = thymine + NADPH + H(+). It functions in the pathway amino-acid biosynthesis; beta-alanine biosynthesis. Its activity is regulated as follows. Inactivated by 5-iodouracil. Functionally, involved in pyrimidine base degradation. Catalyzes the reduction of uracil and thymine. Also involved the degradation of the chemotherapeutic drug 5-fluorouracil. In Rattus norvegicus (Rat), this protein is Dihydropyrimidine dehydrogenase [NADP(+)].